A 256-amino-acid chain; its full sequence is MDIFNAIILGIIEGITEFLPISSTGHIIVAAQWLGIEATATNQAFGVIIQLAAILAVLANYKDKFTPKHLNLWIKVAIAFIPLGIIAFIFSDVIKALFNVPVVGVMFIVGGVIFLLLERNYKEQNCTTTDVTQVTYKQAIWIGIAQVFALIPGTSRAGSSIVGAMLCGLNRKASAEFSFLLGLPVLAAASGYDLLKHYDLFTFDDLTALAVGFVTSFIVAYFTIKLFIRFLENFTFVSFGIYRIVFGVILLTIAYV.

The next 8 helical transmembrane spans lie at 1–21 (MDIF…FLPI), 38–58 (ATAT…LAVL), 70–90 (LNLW…AFIF), 97–117 (LFNV…FLLL), 134–154 (VTYK…IPGT), 175–195 (AEFS…YDLL), 208–228 (ALAV…KLFI), and 236–256 (FVSF…IAYV).

This sequence belongs to the UppP family.

The protein resides in the cell inner membrane. The catalysed reaction is di-trans,octa-cis-undecaprenyl diphosphate + H2O = di-trans,octa-cis-undecaprenyl phosphate + phosphate + H(+). Functionally, catalyzes the dephosphorylation of undecaprenyl diphosphate (UPP). Confers resistance to bacitracin. The sequence is that of Undecaprenyl-diphosphatase 2 from Pseudoalteromonas translucida (strain TAC 125).